A 193-amino-acid polypeptide reads, in one-letter code: GTP cyclohydrolase 1 (193 aa).

The Zn(2+) site is built by C83, H86, and C154.

It belongs to the GTP cyclohydrolase I family. As to quaternary structure, homomer.

The enzyme catalyses GTP + H2O = 7,8-dihydroneopterin 3'-triphosphate + formate + H(+). The protein operates within cofactor biosynthesis; 7,8-dihydroneopterin triphosphate biosynthesis; 7,8-dihydroneopterin triphosphate from GTP: step 1/1. The chain is GTP cyclohydrolase 1 from Porphyromonas gingivalis (strain ATCC 33277 / DSM 20709 / CIP 103683 / JCM 12257 / NCTC 11834 / 2561).